Reading from the N-terminus, the 1007-residue chain is Bifunctional glutamine synthetase adenylyltransferase/adenylyl-removing enzyme (1007 aa).

Positions 1–496 (MTREQLSLTV…LHERLFYRPL (496 aa)) are adenylyl removase. The segment at 505–1007 (NEDARLSGEA…GPPQRPATTA (503 aa)) is adenylyl transferase.

It belongs to the GlnE family. Mg(2+) serves as cofactor.

It carries out the reaction [glutamine synthetase]-O(4)-(5'-adenylyl)-L-tyrosine + phosphate = [glutamine synthetase]-L-tyrosine + ADP. The catalysed reaction is [glutamine synthetase]-L-tyrosine + ATP = [glutamine synthetase]-O(4)-(5'-adenylyl)-L-tyrosine + diphosphate. Functionally, involved in the regulation of glutamine synthetase GlnA, a key enzyme in the process to assimilate ammonia. When cellular nitrogen levels are high, the C-terminal adenylyl transferase (AT) inactivates GlnA by covalent transfer of an adenylyl group from ATP to specific tyrosine residue of GlnA, thus reducing its activity. Conversely, when nitrogen levels are low, the N-terminal adenylyl removase (AR) activates GlnA by removing the adenylyl group by phosphorolysis, increasing its activity. The regulatory region of GlnE binds the signal transduction protein PII (GlnB) which indicates the nitrogen status of the cell. This is Bifunctional glutamine synthetase adenylyltransferase/adenylyl-removing enzyme from Leifsonia xyli subsp. xyli (strain CTCB07).